The chain runs to 609 residues: N-acetyltransferase ESCO2 (609 aa).

4 disordered regions span residues 1 to 71, 100 to 165, 197 to 241, and 314 to 357; these read MLSR…RVSP, EAKS…TDQV, KKPT…SPVR, and PDHD…LTAT. 2 stretches are compositionally biased toward polar residues: residues 13–22 and 41–54; these read AESNPSKKQI and ISLN…STPK. The span at 126–135 shows a compositional bias: basic residues; sequence PAKKVQKKPR. The segment covering 214 to 230 has biased composition (basic and acidic residues); it reads PTYEKPSIRKPVREKEL. Residues 345–355 show a composition bias toward polar residues; the sequence is PLNSSTPSALT. The segment at 392-416 adopts a CCHH-type zinc-finger fold; sequence TTCASCGMLYSTDSPEDNFQHTQFH.

This sequence belongs to the acetyltransferase family. ECO subfamily.

It is found in the nucleus. Its subcellular location is the chromosome. It carries out the reaction L-lysyl-[protein] + acetyl-CoA = N(6)-acetyl-L-lysyl-[protein] + CoA + H(+). Functionally, acetyltransferase required for the establishment of sister chromatid cohesion. Couples the processes of cohesion and DNA replication to ensure that only sister chromatids become paired together. Essential for early development. This Danio rerio (Zebrafish) protein is N-acetyltransferase ESCO2 (esco2).